We begin with the raw amino-acid sequence, 372 residues long: AA9 family lytic polysaccharide monooxygenase C (372 aa).

The signal sequence occupies residues 1 to 16; it reads MFRSALFLLLAPLALS. Cu(2+) contacts are provided by His-17 and His-99. An intrachain disulfide couples Cys-59 to Cys-189. Positions 174 and 184 each coordinate O2. Residue Tyr-186 participates in Cu(2+) binding.

Belongs to the polysaccharide monooxygenase AA9 family. It depends on Cu(2+) as a cofactor.

The protein localises to the secreted. The enzyme catalyses [(1-&gt;4)-beta-D-glucosyl]n+m + reduced acceptor + O2 = 4-dehydro-beta-D-glucosyl-[(1-&gt;4)-beta-D-glucosyl]n-1 + [(1-&gt;4)-beta-D-glucosyl]m + acceptor + H2O.. Lytic polysaccharide monooxygenase (LPMO) that depolymerizes crystalline and amorphous polysaccharides via the oxidation of scissile alpha- or beta-(1-4)-glycosidic bonds, yielding C1 or C4 oxidation products. Catalysis by LPMOs requires the reduction of the active-site copper from Cu(II) to Cu(I) by a reducing agent and H(2)O(2) or O(2) as a cosubstrate. The chain is AA9 family lytic polysaccharide monooxygenase C from Aspergillus tamarii.